The following is a 500-amino-acid chain: Replication factor C large subunit (500 aa).

44–51 (GSPGVGKT) contacts ATP. The segment at 443–500 (HAADDLGASDGETTNASGTASSSGDDGDADGTTDGDGSDANDGNDDDDDGQAGLSDFV) is disordered. The span at 455 to 466 (TTNASGTASSSG) shows a compositional bias: low complexity. Residues 467–492 (DDGDADGTTDGDGSDANDGNDDDDDG) show a composition bias toward acidic residues.

The protein belongs to the activator 1 small subunits family. RfcL subfamily. Heteromultimer composed of small subunits (RfcS) and large subunits (RfcL).

Functionally, part of the RFC clamp loader complex which loads the PCNA sliding clamp onto DNA. In Halorubrum lacusprofundi (strain ATCC 49239 / DSM 5036 / JCM 8891 / ACAM 34), this protein is Replication factor C large subunit.